Here is a 374-residue protein sequence, read N- to C-terminus: Queuine tRNA-ribosyltransferase (374 aa).

The active-site Proton acceptor is D91. Substrate-binding positions include 91 to 95 (DSGGY), D145, Q189, and G216. Residues 247–253 (GVGTVPD) are RNA binding. D266 serves as the catalytic Nucleophile. Positions 271–275 (TRNAR) are RNA binding; important for wobble base 34 recognition. Zn(2+) is bound by residues C304, C306, C309, and H335.

The protein belongs to the queuine tRNA-ribosyltransferase family. In terms of assembly, homodimer. Within each dimer, one monomer is responsible for RNA recognition and catalysis, while the other monomer binds to the replacement base PreQ1. Zn(2+) serves as cofactor.

It catalyses the reaction 7-aminomethyl-7-carbaguanine + guanosine(34) in tRNA = 7-aminomethyl-7-carbaguanosine(34) in tRNA + guanine. Its pathway is tRNA modification; tRNA-queuosine biosynthesis. In terms of biological role, catalyzes the base-exchange of a guanine (G) residue with the queuine precursor 7-aminomethyl-7-deazaguanine (PreQ1) at position 34 (anticodon wobble position) in tRNAs with GU(N) anticodons (tRNA-Asp, -Asn, -His and -Tyr). Catalysis occurs through a double-displacement mechanism. The nucleophile active site attacks the C1' of nucleotide 34 to detach the guanine base from the RNA, forming a covalent enzyme-RNA intermediate. The proton acceptor active site deprotonates the incoming PreQ1, allowing a nucleophilic attack on the C1' of the ribose to form the product. After dissociation, two additional enzymatic reactions on the tRNA convert PreQ1 to queuine (Q), resulting in the hypermodified nucleoside queuosine (7-(((4,5-cis-dihydroxy-2-cyclopenten-1-yl)amino)methyl)-7-deazaguanosine). The chain is Queuine tRNA-ribosyltransferase from Leptospira borgpetersenii serovar Hardjo-bovis (strain JB197).